A 537-amino-acid chain; its full sequence is Sodium/hydrogen exchanger 9B2 (537 aa).

Basic and acidic residues predominate over residues 1–10 (MGDEDKRITY). The disordered stretch occupies residues 1–28 (MGDEDKRITYEDSEPSTGMNYTPSMHQE). The Cytoplasmic portion of the chain corresponds to 1-86 (MGDEDKRITY…ACPPHGLLDR (86 aa)). Positions 15–27 (PSTGMNYTPSMHQ) are enriched in polar residues. At Ser49 the chain carries Phosphoserine. Residues 87–104 (VITNVTIIVLLWAVVWSI) traverse the membrane as a helical segment. The Extracellular segment spans residues 105–113 (TGSECLPGG). The chain crosses the membrane as a helical span at residues 114–133 (NLFGIIILFYCAIIGGKLLG). Topologically, residues 134-144 (LIKLPTLPPLP) are cytoplasmic. Residues 145-161 (SLLGMLLAGFLIRNIPV) traverse the membrane as a helical segment. Over 162-171 (INDNVQIKHK) the chain is Extracellular. The chain crosses the membrane as a helical span at residues 172-189 (WSSSLRSIALSIILVRAG). Topologically, residues 190-200 (LGLDSKALKKL) are cytoplasmic. The helical transmembrane segment at 201–227 (KGVCVRLSMGPCIVEACTSALLAHYLL) threads the bilayer. At 228–233 (GLPWQW) the chain is on the extracellular side. A helical membrane pass occupies residues 234 to 242 (GFILGFVLG). The Cytoplasmic segment spans residues 243–270 (AVSPAVVVPSMLLLQGGGYGVEKGVPTL). The Na(+) site is built by Val244, Gly275, Asp278, and Asp279. The chain crosses the membrane as a helical span at residues 271–290 (LMAAGSFDDILAITGFNTCL). Residues 291 to 300 (GIAFSTGSTV) lie on the Extracellular side of the membrane. Residues 301–324 (FNVLRGVLEVVIGVATGSVLGFFI) traverse the membrane as a helical segment. Residues 325 to 339 (QYFPSRDQDKLVCKR) lie on the Cytoplasmic side of the membrane. Residues 340-357 (TFLVLGLSVLAVFSSVHF) traverse the membrane as a helical segment. Residues 358-361 (GFPG) lie on the Extracellular side of the membrane. The helical transmembrane segment at 362–373 (SGGLCTLVMAFL) threads the bilayer. Topologically, residues 374–390 (AGMGWTSEKAEVEKIIA) are cytoplasmic. A helical membrane pass occupies residues 391-411 (VAWDIFQPLLFGLIGAEVSIA). The Extracellular segment spans residues 412–417 (SLRPET). The helical transmembrane segment at 418-440 (VGLCVATVGIAVLIRILTTFLMV) threads the bilayer. Topologically, residues 441 to 461 (CFAGFNLKEKIFISFAWLPKA) are cytoplasmic. Residues 462–473 (TVQAAIGSVALD) form a helical membrane-spanning segment. The Extracellular segment spans residues 474-486 (TARSHGEKQLEDY). The helical transmembrane segment at 487–509 (GMDVLTVAFLSILITAPIGSLLI) threads the bilayer. Topologically, residues 510–537 (GLLGPRLLQKVEHQNKDEEVQGETSVQV) are cytoplasmic.

Belongs to the monovalent cation:proton antiporter 1 (CPA1) transporter (TC 2.A.36) family. As to quaternary structure, homodimer. Dimerization is essential for SLC9B2 activity. Lipids seem to play a role in the stabilization of the dimerization subdomain. In terms of tissue distribution, widely expressed. High levels detected in the distal tubules of the kidney nephron. Detected in red blood cells (at protein level).

It localises to the cell membrane. The protein resides in the mitochondrion membrane. It is found in the endosome membrane. The protein localises to the recycling endosome membrane. Its subcellular location is the cytoplasmic vesicle. It localises to the secretory vesicle. The protein resides in the synaptic vesicle membrane. It is found in the cell projection. The protein localises to the cilium. Its subcellular location is the flagellum membrane. It localises to the basolateral cell membrane. The protein resides in the apical cell membrane. It carries out the reaction Li(+)(out) + H(+)(in) = Li(+)(in) + H(+)(out). It catalyses the reaction Li(+)(in) + Na(+)(out) = Li(+)(out) + Na(+)(in). The catalysed reaction is Na(+)(in) + H(+)(out) = Na(+)(out) + H(+)(in). Allosterically inhibited by the N-terminal domain. Inhibited by phloretin. Electroneutral Na(+) Li(+)/H(+) antiporter that extrudes Na(+) or Li(+) in exchange for external protons across the membrane. Uses the proton gradient/membrane potential to extrude sodium. Contributes to the regulation of intracellular pH and sodium homeostasis. Also able to mediate Na(+)/Li(+) antiporter activity in kidney. May play a physiological role in renal tubular function and blood pressure homeostasis. Plays an important role for insulin secretion and clathrin-mediated endocytosis in beta-cells. Involved in sperm motility and fertility. It is controversial whether SLC9B2 plays a role in osteoclast differentiation or not. This is Sodium/hydrogen exchanger 9B2 from Homo sapiens (Human).